A 230-amino-acid polypeptide reads, in one-letter code: Cytidylate kinase (230 aa).

Residue 12 to 20 (GPSGTGKST) participates in ATP binding.

This sequence belongs to the cytidylate kinase family. Type 1 subfamily.

It localises to the cytoplasm. It catalyses the reaction CMP + ATP = CDP + ADP. It carries out the reaction dCMP + ATP = dCDP + ADP. The protein is Cytidylate kinase of Corynebacterium glutamicum (strain ATCC 13032 / DSM 20300 / JCM 1318 / BCRC 11384 / CCUG 27702 / LMG 3730 / NBRC 12168 / NCIMB 10025 / NRRL B-2784 / 534).